The chain runs to 639 residues: MRFFNAHKSAEDGNYSETTNAISLKNERQSRDLSVNKHGRMLLTALLENFCQLYDNNPAKSKRLFALICHTLQKIGILEEEYIEELAAVRSNYQDALHHLILQAREAIRLDDAEERLLALPDPTNVFEKFPQETALSKFSVDGLNVRQFRFRDLTLESWLQSRNSRYIEDFEEYSLLGRGGFGSVYHVRNKIDGAEYAMKKINSTFQQMSYSKIFREIKCLAKMDHPNVIRYFSSWVESTTEATQMPIVMSKNSSRVLGTSSYCDVNGMDSIIFEPTESSALTDDILFAEDPGTESIISTSRKSSYSSTTESSNFENLESPRNLHDSNVSTFNNTTILDDDYSSSMHISKTGPTHSFIIYIQMQLCFDDLESYLIRRNHFLSFPLCKEQIQLHTDLFRMIINGVMYVHEGVNLIHRDIKPSNIFLAKSLPEDRGSVPLISYNDKNDLKEYITPKIGDFGLVVENKKNTETALSFLERNHLPNLQDETQHIGTATYAAPELLDAMSSQHNKFTKKIDTFSLGMVLFELLHPFQTNMERATKLQDLRRGNLPEEFVEQHICESSLILWMTAKDPTKRPSLLEVLNCGLLLPNQVSMPNISNIVSTNHLDVETQMKLIMDENQRLREQIAVLRSRIQHLETR.

Positions 171–588 (FEEYSLLGRG…LEVLNCGLLL (418 aa)) constitute a Protein kinase domain. ATP-binding positions include 177–185 (LGRGGFGSV) and Lys-200. A compositionally biased stretch (low complexity) spans 298–320 (ISTSRKSSYSSTTESSNFENLES). The segment at 298–322 (ISTSRKSSYSSTTESSNFENLESPR) is disordered. The Proton acceptor role is filled by Asp-417.

The protein belongs to the protein kinase superfamily. Ser/Thr protein kinase family. GCN2 subfamily. Post-translationally, autophosphorylated.

The enzyme catalyses L-seryl-[protein] + ATP = O-phospho-L-seryl-[protein] + ADP + H(+). The catalysed reaction is L-threonyl-[protein] + ATP = O-phospho-L-threonyl-[protein] + ADP + H(+). In terms of biological role, mediates down-regulation of protein synthesis in response to stress conditions by the phosphorylation of the alpha subunit of eIF-2 (tif211) on 'Ser-52'. Protein synthesis is inhibited at the level of initiation. Activity is inhibited in the presence of heme. This Schizosaccharomyces pombe (strain 972 / ATCC 24843) (Fission yeast) protein is Eukaryotic translation initiation factor 2-alpha kinase 2 (hri2).